The chain runs to 209 residues: Claudin-4 (209 aa).

At 1–9 (MASMGLQVM) the chain is on the cytoplasmic side. The interaction with EPHA2 stretch occupies residues 1–103 (MASMGLQVMG…GVLLSVVGGK (103 aa)). The helical transmembrane segment at 10–30 (GIALAVLGWLGAILSCALPMW) threads the bilayer. The Extracellular segment spans residues 31-81 (RVTAFIGSNIVTSQTIWEGLWMNCVVQSTGQMQCKVYDSLLALPQDLQAAR). A disulfide bridge connects residues C54 and C64. A helical membrane pass occupies residues 82–102 (ALIVICIILAVFGVLLSVVGG). At 103-117 (KCTNCVDDESSKAKI) the chain is on the cytoplasmic side. The helical transmembrane segment at 118–138 (MIVAGVVFLLAGLLVMVPVSW) threads the bilayer. Topologically, residues 139-160 (TANNVIRDFYNPLVASGQKREM) are extracellular. The helical transmembrane segment at 161 to 181 (GASLYVGWAAAGLLILGGALL) threads the bilayer. Residues 182–209 (CFNCPPRNDKPYSAKYSAARSAPASNYV) lie on the Cytoplasmic side of the membrane. The residue at position 208 (Y208) is a Phosphotyrosine; by EPHA2. The interactions with TJP1, TJP2 and TJP3 stretch occupies residues 208 to 209 (YV).

The protein belongs to the claudin family. Interacts with EPHA2; phosphorylates CLDN4 and may regulate tight junctions. Directly interacts with TJP1/ZO-1, TJP2/ZO-2 and TJP3/ZO-3. Interacts with CLDN1. Interacts with CLDN8. Phosphorylated. Phosphorylation by EPHA2 is stimulated by EFNA1 and alters interaction with TJP1.

The protein resides in the cell junction. It is found in the tight junction. It localises to the cell membrane. Channel-forming tight junction protein that mediates paracellular chloride transport in the kidney. Plays a critical role in the paracellular reabsorption of filtered chloride in the kidney collecting ducts. Claudins play a major role in tight junction-specific obliteration of the intercellular space, through calcium-independent cell-adhesion activity. The sequence is that of Claudin-4 (CLDN4) from Bos taurus (Bovine).